A 336-amino-acid polypeptide reads, in one-letter code: MATLHAPAFELPEILNTKTNLADARIGAQVIECSDDFFAEAKRMLQFEAPIFVEDKFDDHGKWMDGWETRRKRHAGYDWCIVKLGVSGKISALDIDTTFFTGNYPASASLEACYAPNGDLTGVTWQSILENTELGPSQHHIFMVNNDAIFTHIRLNIFPDGGVARLRVYGDVHIQVTDHEQTLDLLALENGGRVIAYSDAHFGHPRNLINPGRGVNMGDGWETKRRRAPGYDWCILALGKSGKIEKIEIDTAHFKGNFPAEVSIQAVYLENATDAQLIPQSMFWSYLLEAQPMQMDHIHEYVNEILKHEKISHIRINMIPDGGISRVRLWGKIAKS.

This sequence belongs to the allantoicase family.

The catalysed reaction is allantoate + H2O = (S)-ureidoglycolate + urea. The protein operates within nitrogen metabolism; (S)-allantoin degradation; (S)-ureidoglycolate from allantoate (aminidohydrolase route): step 1/1. In Acinetobacter baumannii (strain AYE), this protein is Probable allantoicase.